The primary structure comprises 676 residues: Pre-mRNA-splicing factor CLF1 (676 aa).

16 HAT repeats span residues 46–78 (EYQGRKRQEYEGALRRNRLNTGQWMRYAQWELE), 80–112 (REFARARSVFERALEVNSTHVPTWIRYIQCELK), 114–146 (KNINHARNLLDRAVTLLPRVDKLWFTYVATEET), 148–179 (GNIAGCRAVFERWMHWRPPVTAWAAYVNMEKR), 181–212 (REFDRARGILRRYVTVHPGAPAWNKWAKFEME), 215–255 (NRDT…FETR), 257–291 (REYERARALYTYGLEKLPKSKSAKLYADYTAFEKQ), 301–333 (VVLTKRRSKYEDQLKEDPADYDTWFSYITLGQE), 336–369 (LEADQIREIFERAVSNVPPHSKRLWRRYIFLWIK), 379–415 (KEVEKAREIYKTCISIIPHKKFTFAKVWLLWAKFEIR), 417–449 (GNLPEARKILGRGLGMSGGKPALYKGYIALEAK), 451–483 (REFDRCRKLYDKYVEKFAEFAAPWMEYAELEQM), 485–519 (GDEERARAIFELAVSQPEMEMPELVWKRFIEFEAE), 521–553 (ENYDRARAIYRQLLDRTHGHIKVWISFAQFEVT), 576–614 (EAKARARSIFGEAWDALKAANKREERVVLFESWREFEEE), and 620–652 (SKADLDKRKPTPVKKKRKLEDGTFEEYIDYVFP). The segment covering 616–628 (GDDKSKADLDKRK) has biased composition (basic and acidic residues). Residues 616–636 (GDDKSKADLDKRKPTPVKKKR) form a disordered region.

The protein belongs to the crooked-neck family. As to quaternary structure, associated with the spliceosome.

Its subcellular location is the nucleus. In terms of biological role, involved in pre-mRNA splicing and cell cycle progression. Required for the spliceosome assembly and initiation of the DNA replication. This chain is Pre-mRNA-splicing factor CLF1 (CLF1), found in Yarrowia lipolytica (strain CLIB 122 / E 150) (Yeast).